Here is a 348-residue protein sequence, read N- to C-terminus: Zinc finger and SCAN domain-containing protein 16 (348 aa).

One can recognise an SCAN box domain in the interval 41–123 (RQHFRKLCYQ…TVLEDLEREL (83 aa)). Disordered regions lie at residues 160–184 (PKKTQLEQEAGKPQRNGDKTRTKNE) and 205–226 (RLNKDTPQHPKSKDIIENEGRS). The span at 163-184 (TQLEQEAGKPQRNGDKTRTKNE) shows a compositional bias: basic and acidic residues. 4 C2H2-type zinc fingers span residues 236–258 (YKCDECGKSFSHSSDLSKHRRTH), 264–286 (YKCDECGKAFIQRSHLIGHHRVH), 292–314 (YKCKECGKDFSGRTGLIQHQRIH), and 320–342 (YECDECGRPFRVSSALIRHQRIH).

The protein belongs to the krueppel C2H2-type zinc-finger protein family.

Its subcellular location is the nucleus. May be involved in transcriptional regulation. This Homo sapiens (Human) protein is Zinc finger and SCAN domain-containing protein 16 (ZSCAN16).